A 150-amino-acid polypeptide reads, in one-letter code: Suppressor of HU sensitivity involved in recombination protein 1 (150 aa).

As to quaternary structure, component of the SHU complex composed of at least CSM2, PSY3, SHU1 and SHU2.

It is found in the nucleus. Functionally, plays a role in a RAD51/RAD54-dependent homologous recombination repair (HRR) pathway to repair MMS-induced lesions during S-phase. This Saccharomyces cerevisiae (strain ATCC 204508 / S288c) (Baker's yeast) protein is Suppressor of HU sensitivity involved in recombination protein 1 (SHU1).